A 377-amino-acid chain; its full sequence is Nitric oxide reductase FlRd-NAD(+) reductase (377 aa).

Belongs to the FAD-dependent oxidoreductase family. The cofactor is FAD.

It localises to the cytoplasm. The enzyme catalyses 2 reduced [nitric oxide reductase rubredoxin domain] + NAD(+) + H(+) = 2 oxidized [nitric oxide reductase rubredoxin domain] + NADH. The protein operates within nitrogen metabolism; nitric oxide reduction. One of at least two accessory proteins for anaerobic nitric oxide (NO) reductase. Reduces the rubredoxin moiety of NO reductase. This chain is Nitric oxide reductase FlRd-NAD(+) reductase, found in Escherichia coli (strain SMS-3-5 / SECEC).